We begin with the raw amino-acid sequence, 257 residues long: Imidazole glycerol phosphate synthase subunit HisF (257 aa).

Catalysis depends on residues Asp-12 and Asp-131.

This sequence belongs to the HisA/HisF family. In terms of assembly, heterodimer of HisH and HisF.

It is found in the cytoplasm. It catalyses the reaction 5-[(5-phospho-1-deoxy-D-ribulos-1-ylimino)methylamino]-1-(5-phospho-beta-D-ribosyl)imidazole-4-carboxamide + L-glutamine = D-erythro-1-(imidazol-4-yl)glycerol 3-phosphate + 5-amino-1-(5-phospho-beta-D-ribosyl)imidazole-4-carboxamide + L-glutamate + H(+). It participates in amino-acid biosynthesis; L-histidine biosynthesis; L-histidine from 5-phospho-alpha-D-ribose 1-diphosphate: step 5/9. Its function is as follows. IGPS catalyzes the conversion of PRFAR and glutamine to IGP, AICAR and glutamate. The HisF subunit catalyzes the cyclization activity that produces IGP and AICAR from PRFAR using the ammonia provided by the HisH subunit. The protein is Imidazole glycerol phosphate synthase subunit HisF of Rhodococcus opacus (strain B4).